The sequence spans 23 residues: Toxin Acra2 (23 aa).

Residues 2–23 enclose the LCN-type CS-alpha/beta domain; that stretch reads KDGYIVDSNGCAPECFPTNXGC.

Post-translationally, contains 4 disulfide bonds. As to expression, expressed by the venom gland.

The protein localises to the secreted. Excitatory insect toxins induce a spastic paralysis. They bind voltage-independently at site-4 of sodium channels (Nav) and shift the voltage of activation toward more negative potentials thereby affecting sodium channel activation and promoting spontaneous and repetitive firing. Is lethal to mice. Is about 1% of the total protein in the venom. This Androctonus crassicauda (Arabian fat-tailed scorpion) protein is Toxin Acra2.